The sequence spans 377 residues: Mitogen-activated protein kinase mpkC (377 aa).

Residues 20–299 enclose the Protein kinase domain; sequence YVNPQPIGMG…AQDALRHPYL (280 aa). Residues 26-34 and Lys-49 each bind ATP; that span reads IGMGSFGLV. Asp-141 functions as the Proton acceptor in the catalytic mechanism. Position 171 is a phosphothreonine (Thr-171). Residues 171–173 carry the TXY motif; that stretch reads TGY. Tyr-173 carries the phosphotyrosine modification.

Belongs to the protein kinase superfamily. Ser/Thr protein kinase family. MAP kinase subfamily. HOG1 sub-subfamily. Mg(2+) serves as cofactor. Dually phosphorylated on Thr-171 and Tyr-173, which activates the enzyme.

The enzyme catalyses L-seryl-[protein] + ATP = O-phospho-L-seryl-[protein] + ADP + H(+). The catalysed reaction is L-threonyl-[protein] + ATP = O-phospho-L-threonyl-[protein] + ADP + H(+). Activated by tyrosine and threonine phosphorylation. Mitogen-activated protein kinase required for growth on media where sorbitol or mannitol is the sole carbon source. This Neosartorya fischeri (strain ATCC 1020 / DSM 3700 / CBS 544.65 / FGSC A1164 / JCM 1740 / NRRL 181 / WB 181) (Aspergillus fischerianus) protein is Mitogen-activated protein kinase mpkC (mpkc).